The primary structure comprises 170 residues: MSQKMAKEGPRLSKNQKFSEHFSIHCCPPFTFLNSKREIVDRKYSICKSGCFYQKKEEDWICCACQKTSRRATSPQRPKHQPAASPVVVRAPPAKPKSPLMPAKPRSPPRPAKPRSPSRTERQPRPRPEVRPPPAKQKPPQKSKQPARSSPLRGPGTSRGGSPTRAPRFW.

A disordered region spans residues 69–170 (SRRATSPQRP…GSPTRAPRFW (102 aa)). Residues 82-92 (PAASPVVVRAP) are compositionally biased toward low complexity. A phosphoserine mark is found at serine 85, serine 98, and serine 107. Repeat copies occupy residues 93 to 101 (PAKPKSPLM) and 105 to 110 (PRSPPR). Positions 93-115 (PAKPKSPLMPAKPRSPPRPAKPR) are 3 X 9 AA approximate tandem repeats. One copy of the 3; half-length repeat lies at 111-115 (PAKPR). The span at 118-130 (SRTERQPRPRPEV) shows a compositional bias: basic and acidic residues. Positions 138 to 151 (KPPQKSKQPARSSP) are enriched in low complexity.

It is found in the cytoplasm. The protein localises to the perinuclear region. In terms of biological role, may play a role in compacting or stabilizing the myelin sheath possibly by binding the negatively charged acidic phospholipids of the cytoplasmic membrane. The protein is Myelin-associated oligodendrocyte basic protein (Mobp) of Mus musculus (Mouse).